The following is a 316-amino-acid chain: Triplex capsid protein 2 (316 aa).

The protein belongs to the herpesviridae TRX2 protein family. In terms of assembly, interacts with TRX1 and major capisd protein/MCP.

It localises to the virion. The protein localises to the host nucleus. In terms of biological role, structural component of the T=16 icosahedral capsid. The capsid is composed of pentamers and hexamers of major capsid protein/MCP, which are linked together by heterotrimers called triplexes. These triplexes are formed by a single molecule of triplex protein 1/TRX1 and two copies of triplex protein 2/TRX2. Additionally, TRX1 is required for efficient transport of TRX2 to the nucleus, which is the site of capsid assembly. The polypeptide is Triplex capsid protein 2 (Homo sapiens (Human)).